Consider the following 593-residue polypeptide: Chromosomal replication initiator protein DnaA (593 aa).

The tract at residues 1–71 (MSDPCWEQCV…EIISNSDAGP (71 aa)) is domain I, interacts with DnaA modulators. The domain II stretch occupies residues 71–256 (PKSLEIAVAQ…DVEGGIQHKH (186 aa)). The interval 97–186 (AVPVPDPLPS…STESSADRER (90 aa)) is disordered. Positions 113–124 (SFQPPKGNTSAD) are enriched in polar residues. Residues 257–473 (NLNTTFIFDN…GALKRVIANA (217 aa)) form a domain III, AAA+ region region. ATP is bound by residues Gly301, Gly303, Lys304, and Thr305. The domain IV, binds dsDNA stretch occupies residues 474–593 (QFTQRSISVE…VKNLLRTLTT (120 aa)).

This sequence belongs to the DnaA family. As to quaternary structure, oligomerizes as a right-handed, spiral filament on DNA at oriC.

The protein localises to the cytoplasm. Its function is as follows. Plays an essential role in the initiation and regulation of chromosomal replication. ATP-DnaA binds to the origin of replication (oriC) to initiate formation of the DNA replication initiation complex once per cell cycle. Binds the DnaA box (a 9 base pair repeat at the origin) and separates the double-stranded (ds)DNA. Forms a right-handed helical filament on oriC DNA; dsDNA binds to the exterior of the filament while single-stranded (ss)DNA is stabiized in the filament's interior. The ATP-DnaA-oriC complex binds and stabilizes one strand of the AT-rich DNA unwinding element (DUE), permitting loading of DNA polymerase. After initiation quickly degrades to an ADP-DnaA complex that is not apt for DNA replication. Binds acidic phospholipids. This is Chromosomal replication initiator protein DnaA from Teredinibacter turnerae (strain ATCC 39867 / T7901).